The primary structure comprises 333 residues: Ketol-acid reductoisomerase (NADP(+)) (333 aa).

In terms of domain architecture, KARI N-terminal Rossmann spans 1–181 (MKVYYDQDAD…GGARSGVIET (181 aa)). NADP(+)-binding positions include 24 to 27 (YGSQ), Arg47, and 82 to 85 (DEVQ). His107 is a catalytic residue. Residue Gly133 coordinates NADP(+). Residues 182–327 (TFREETETDL…KELRSMMPWL (146 aa)) form the KARI C-terminal knotted domain. Residues Asp190, Glu194, Glu226, and Glu230 each coordinate Mg(2+). Residue Ser251 participates in substrate binding.

This sequence belongs to the ketol-acid reductoisomerase family. Mg(2+) serves as cofactor.

The catalysed reaction is (2R)-2,3-dihydroxy-3-methylbutanoate + NADP(+) = (2S)-2-acetolactate + NADPH + H(+). The enzyme catalyses (2R,3R)-2,3-dihydroxy-3-methylpentanoate + NADP(+) = (S)-2-ethyl-2-hydroxy-3-oxobutanoate + NADPH + H(+). It functions in the pathway amino-acid biosynthesis; L-isoleucine biosynthesis; L-isoleucine from 2-oxobutanoate: step 2/4. The protein operates within amino-acid biosynthesis; L-valine biosynthesis; L-valine from pyruvate: step 2/4. Involved in the biosynthesis of branched-chain amino acids (BCAA). Catalyzes an alkyl-migration followed by a ketol-acid reduction of (S)-2-acetolactate (S2AL) to yield (R)-2,3-dihydroxy-isovalerate. In the isomerase reaction, S2AL is rearranged via a Mg-dependent methyl migration to produce 3-hydroxy-3-methyl-2-ketobutyrate (HMKB). In the reductase reaction, this 2-ketoacid undergoes a metal-dependent reduction by NADPH to yield (R)-2,3-dihydroxy-isovalerate. In Desulfovibrio desulfuricans (strain ATCC 27774 / DSM 6949 / MB), this protein is Ketol-acid reductoisomerase (NADP(+)).